The sequence spans 784 residues: Lon protease (784 aa).

A Lon N-terminal domain is found at 11 to 204 (IPVLPLRDVV…YLMAMMESEI (194 aa)). An ATP-binding site is contributed by 356-363 (GPPGVGKT). The Lon proteolytic domain occupies 592 to 773 (ENRVGQVTGL…EEVLTLALQN (182 aa)). Residues Ser-679 and Lys-722 contribute to the active site.

This sequence belongs to the peptidase S16 family. Homohexamer. Organized in a ring with a central cavity. ATP binding and hydrolysis do not affect the oligomeric state of the enzyme.

It localises to the cytoplasm. It carries out the reaction Hydrolysis of proteins in presence of ATP.. Its activity is regulated as follows. Contains an allosteric site (distinct from its active site), whose occupancy by an unfolded polypeptide leads to enzyme activation. Its function is as follows. ATP-dependent serine protease that mediates the selective degradation of mutant and abnormal proteins as well as certain short-lived regulatory proteins. Required for cellular homeostasis and for survival from DNA damage and developmental changes induced by stress. Degrades polypeptides processively to yield small peptide fragments that are 5 to 10 amino acids long. Binds to DNA in a double-stranded, site-specific manner. Endogenous substrates include the regulatory proteins RcsA and SulA, the transcriptional activator SoxS, and UmuD. Its overproduction specifically inhibits translation through at least two different pathways, one of them being the YoeB-YefM toxin-antitoxin system. This chain is Lon protease, found in Escherichia coli O6:H1 (strain CFT073 / ATCC 700928 / UPEC).